Here is a 465-residue protein sequence, read N- to C-terminus: Cysteine--tRNA ligase (465 aa).

Cysteine 27 lines the Zn(2+) pocket. The 'HIGH' region signature appears at 29–39 (PTVYDDAHLGH). Positions 207, 237, and 241 each coordinate Zn(2+). Residues 269–273 (KMSKS) carry the 'KMSKS' region motif. Lysine 272 contributes to the ATP binding site.

It belongs to the class-I aminoacyl-tRNA synthetase family. In terms of assembly, monomer. Requires Zn(2+) as cofactor.

It localises to the cytoplasm. The catalysed reaction is tRNA(Cys) + L-cysteine + ATP = L-cysteinyl-tRNA(Cys) + AMP + diphosphate. In Helicobacter pylori (strain J99 / ATCC 700824) (Campylobacter pylori J99), this protein is Cysteine--tRNA ligase (cysS).